Consider the following 461-residue polypeptide: General transcription and DNA repair factor IIH subunit SSL1 (461 aa).

Positions 1–70 (MAPVVISESE…RLSNRNLQGS (70 aa)) are disordered. A compositionally biased stretch (basic and acidic residues) spans 26-37 (VHFDGEGDDRVD). Over residues 53-63 (HVQRKKKKRLS) the composition is skewed to basic residues. The region spanning 125 to 304 (SLILTLDCSE…THLKELFNEA (180 aa)) is the VWFA domain. The segment at 349–366 (CPNCHSKVCSLPTVCPCC) adopts a C4-type zinc-finger fold.

The protein belongs to the GTF2H2 family. As to quaternary structure, component of the 7-subunit TFIIH core complex composed of XPB/SSL2, XPD/RAD3, SSL1, TFB1, TFB2, TFB4 and TFB5, which is active in NER. The core complex associates with the 3-subunit CTD-kinase module TFIIK composed of CCL1, KIN28 and TFB3 to form the 10-subunit holoenzyme (holo-TFIIH) active in transcription. An additionnal subunit, TFB6, plays a role in the dissociation of the SSL2 helicase from TFIIH after transcription initiation.

It localises to the nucleus. Component of the general transcription and DNA repair factor IIH (TFIIH) core complex, which is involved in general and transcription-coupled nucleotide excision repair (NER) of damaged DNA and, when complexed to TFIIK, in RNA transcription by RNA polymerase II. In NER, TFIIH acts by opening DNA around the lesion to allow the excision of the damaged oligonucleotide and its replacement by a new DNA fragment. In transcription, TFIIH has an essential role in transcription initiation. When the pre-initiation complex (PIC) has been established, TFIIH is required for promoter opening and promoter escape. Phosphorylation of the C-terminal tail (CTD) of the largest subunit of RNA polymerase II by the kinase module TFIIK controls the initiation of transcription. The protein is General transcription and DNA repair factor IIH subunit SSL1 (SSL1) of Saccharomyces cerevisiae (strain ATCC 204508 / S288c) (Baker's yeast).